The following is a 221-amino-acid chain: Probable glutathione S-transferase (221 aa).

Positions 4 to 83 (EEVILLDFWP…YIEEVWKDKA (80 aa)) constitute a GST N-terminal domain. Residues S14, K41, I55, and 67-68 (ES) each bind glutathione. The region spanning 90–214 (DPYDRAQARF…PKVLEFVKVL (125 aa)) is the GST C-terminal domain.

It belongs to the GST superfamily. HSP26 family. Root tip-specific expression.

It carries out the reaction RX + glutathione = an S-substituted glutathione + a halide anion + H(+). This Nicotiana tabacum (Common tobacco) protein is Probable glutathione S-transferase.